We begin with the raw amino-acid sequence, 199 residues long: Pectinesterase inhibitor 4 (199 aa).

The signal sequence occupies residues 1 to 25 (MLRFVVLSLTLMVFINSSNFPKTAA). Asn-16, Asn-33, Asn-43, and Asn-83 each carry an N-linked (GlcNAc...) asparagine glycan. An intrachain disulfide couples Cys-42 to Cys-51. An intrachain disulfide couples Cys-109 to Cys-158.

It belongs to the PMEI family. As to quaternary structure, binds reversibly to PME3 to inhibit its activity; the stability of the PME3-PMEI4 complex and the inhibition of the pectin methylesterase (PME) activity is pH-dependent, based on protonation status of amino-acids at the complex interface. Expressed in outer cell layer of roots, particularly in the root-hair zone. Expressed in roots and siliques.

It localises to the secreted. It is found in the extracellular space. The protein resides in the apoplast. Its function is as follows. Pectin methylesterase (PME) inhibitor that can target the root-expressed PME17 and PME3 in a pH-dependent manner, mainly in slightly acidic conditions (pH 6.3 and 5.0) but not at pH 7.5; this processus relies on changes in the protonation of amino acids involved in intermolecular and intramolecular interactions. Regulate de-methylesterification of pectins in roots and affects root growth. The sequence is that of Pectinesterase inhibitor 4 from Arabidopsis thaliana (Mouse-ear cress).